A 652-amino-acid chain; its full sequence is DNA ligase (652 aa).

NAD(+) contacts are provided by residues 29–33 (DSEYD), 78–79 (SL), and Glu-107. Lys-109 functions as the N6-AMP-lysine intermediate in the catalytic mechanism. Residues Arg-130, Glu-164, Lys-278, and Lys-302 each contribute to the NAD(+) site. Residues Cys-395, Cys-398, Cys-413, and Cys-418 each contribute to the Zn(2+) site. A BRCT domain is found at 577–652 (VADAALSGLT…VRDEAWLESL (76 aa)).

Belongs to the NAD-dependent DNA ligase family. LigA subfamily. It depends on Mg(2+) as a cofactor. The cofactor is Mn(2+).

The catalysed reaction is NAD(+) + (deoxyribonucleotide)n-3'-hydroxyl + 5'-phospho-(deoxyribonucleotide)m = (deoxyribonucleotide)n+m + AMP + beta-nicotinamide D-nucleotide.. Its function is as follows. DNA ligase that catalyzes the formation of phosphodiester linkages between 5'-phosphoryl and 3'-hydroxyl groups in double-stranded DNA using NAD as a coenzyme and as the energy source for the reaction. It is essential for DNA replication and repair of damaged DNA. The chain is DNA ligase from Streptococcus pneumoniae (strain JJA).